The chain runs to 421 residues: Eukaryotic translation initiation factor 3 subunit E (421 aa).

A PCI domain is found at 215 to 394; sequence FFQNDTKGKD…STVILNHPSV (180 aa).

It belongs to the eIF-3 subunit E family. Component of the eukaryotic translation initiation factor 3 (eIF-3) complex.

It is found in the cytoplasm. Functionally, component of the eukaryotic translation initiation factor 3 (eIF-3) complex, which is involved in protein synthesis of a specialized repertoire of mRNAs and, together with other initiation factors, stimulates binding of mRNA and methionyl-tRNAi to the 40S ribosome. The eIF-3 complex specifically targets and initiates translation of a subset of mRNAs involved in cell proliferation. This chain is Eukaryotic translation initiation factor 3 subunit E, found in Yarrowia lipolytica (strain CLIB 122 / E 150) (Yeast).